The following is a 95-amino-acid chain: Protein Vpr (95 aa).

Residues 1 to 42 are homooligomerization; the sequence is MEQAPEDQGPQREPYNEWALELLEDLKNEALRHFPRPWLHGL. A phosphoserine; by host mark is found at S79, S93, and S95.

Belongs to the HIV-1 VPR protein family. Homooligomer, may form homodimer. Interacts with p6-gag region of the Pr55 Gag precursor protein through a (Leu-X-X)4 motif near the C-terminus of the P6gag protein. Interacts with host UNG. May interact with host RAD23A/HHR23A. Interacts with host VPRBP/DCAF1, leading to hijack the CUL4A-RBX1-DDB1-DCAF1/VPRBP complex, mediating ubiquitination of host proteins such as TERT and ZGPAT and arrest of the cell cycle in G2 phase. Phosphorylated on several residues by host. These phosphorylations regulate VPR activity for the nuclear import of the HIV-1 pre-integration complex.

It is found in the virion. It localises to the host nucleus. Its subcellular location is the host extracellular space. Its function is as follows. During virus replication, may deplete host UNG protein, and incude G2-M cell cycle arrest. Acts by targeting specific host proteins for degradation by the 26S proteasome, through association with the cellular CUL4A-DDB1 E3 ligase complex by direct interaction with host VPRPB/DCAF-1. Cell cycle arrest reportedly occurs within hours of infection and is not blocked by antiviral agents, suggesting that it is initiated by the VPR carried into the virion. Additionally, VPR induces apoptosis in a cell cycle dependent manner suggesting that these two effects are mechanistically linked. Detected in the serum and cerebrospinal fluid of AIDS patient, VPR may also induce cell death to bystander cells. In terms of biological role, during virus entry, plays a role in the transport of the viral pre-integration (PIC) complex to the host nucleus. This function is crucial for viral infection of non-dividing macrophages. May act directly at the nuclear pore complex, by binding nucleoporins phenylalanine-glycine (FG)-repeat regions. The protein is Protein Vpr of Pan troglodytes (Chimpanzee).